Here is a 193-residue protein sequence, read N- to C-terminus: AP-3 complex subunit sigma-1 (193 aa).

A Phosphoserine modification is found at Ser191.

It belongs to the adaptor complexes small subunit family. In terms of assembly, adaptor protein complex 3 (AP-3) is a heterotetramer composed of two large adaptins (delta-type subunit AP3D1 and beta-type subunit AP3B1 or AP3B2), a medium adaptin (mu-type subunit AP3M1 or AP3M2) and a small adaptin (sigma-type subunit APS1 or AP3S2). Interacts with AGAP1. AP-3 associates with the BLOC-1 complex.

It is found in the golgi apparatus. The protein resides in the cytoplasmic vesicle membrane. Part of the AP-3 complex, an adaptor-related complex which is not clathrin-associated. The complex is associated with the Golgi region as well as more peripheral structures. It facilitates the budding of vesicles from the Golgi membrane and may be directly involved in trafficking to lysosomes. In concert with the BLOC-1 complex, AP-3 is required to target cargos into vesicles assembled at cell bodies for delivery into neurites and nerve terminals. This chain is AP-3 complex subunit sigma-1 (AP3S1), found in Bos taurus (Bovine).